A 340-amino-acid chain; its full sequence is Glycerol-3-phosphate dehydrogenase [NAD(P)+] (340 aa).

4 residues coordinate NADPH: Ser-14, Phe-15, Arg-35, and Lys-108. The sn-glycerol 3-phosphate site is built by Lys-108 and Gly-136. Ala-140 contributes to the NADPH binding site. 5 residues coordinate sn-glycerol 3-phosphate: Lys-191, Asp-244, Ser-254, Arg-255, and Asn-256. Lys-191 functions as the Proton acceptor in the catalytic mechanism. Arg-255 serves as a coordination point for NADPH. Glu-281 contacts NADPH.

This sequence belongs to the NAD-dependent glycerol-3-phosphate dehydrogenase family.

The protein resides in the cytoplasm. It catalyses the reaction sn-glycerol 3-phosphate + NAD(+) = dihydroxyacetone phosphate + NADH + H(+). It carries out the reaction sn-glycerol 3-phosphate + NADP(+) = dihydroxyacetone phosphate + NADPH + H(+). It participates in membrane lipid metabolism; glycerophospholipid metabolism. Its function is as follows. Catalyzes the reduction of the glycolytic intermediate dihydroxyacetone phosphate (DHAP) to sn-glycerol 3-phosphate (G3P), the key precursor for phospholipid synthesis. The protein is Glycerol-3-phosphate dehydrogenase [NAD(P)+] of Pseudomonas paraeruginosa (strain DSM 24068 / PA7) (Pseudomonas aeruginosa (strain PA7)).